Consider the following 364-residue polypeptide: V-type proton ATPase subunit d (364 aa).

The protein belongs to the V-ATPase V0D/AC39 subunit family. In terms of assembly, V-ATPase is a heteromultimeric enzyme composed of a peripheral catalytic V1 complex (components A to H) attached to an integral membrane V0 proton pore complex (components: a, c, c', c'', d, e, f and VOA1).

The protein resides in the vacuole membrane. Subunit of the V0 complex of vacuolar(H+)-ATPase (V-ATPase), a multisubunit enzyme composed of a peripheral complex (V1) that hydrolyzes ATP and a membrane integral complex (V0) that translocates protons. V-ATPase is responsible for acidifying and maintaining the pH of intracellular compartments. This subunit is a non-integral membrane component of the membrane pore domain and is required for proper assembly of the V0 sector. Might be involved in the regulated assembly of V1 subunits onto the membrane sector or alternatively may prevent the passage of protons through V0 pores. The sequence is that of V-type proton ATPase subunit d from Neurospora crassa (strain ATCC 24698 / 74-OR23-1A / CBS 708.71 / DSM 1257 / FGSC 987).